The following is a 379-amino-acid chain: Alpha-humulene synthase eupE (379 aa).

The protein belongs to the terpene synthase family. Alpha-humulene synthase eupE subfamily. Mg(2+) is required as a cofactor.

The enzyme catalyses (2E,6E)-farnesyl diphosphate = alpha-humulene + diphosphate. It participates in secondary metabolite biosynthesis; terpenoid biosynthesis. Its function is as follows. Alpha-humulene synthase; part of the gene cluster that mediates the biosynthesis of eupenifeldin, a bistropolone meroterpenoid that acts as an antitumor agent. The first step of eupenifeldin biosynthesis is the biosynthesis of 3-methylorcinaldehyde performed by the non-reducing polyketide synthase eupA. Oxidative dearomatization of 3-methylorcinaldehyde likely catalyzed by the FAD-dependent monooxygenase eupB is followed by oxidative ring expansion by the 2-oxoglutarate-dependent dioxygenase eupC to provide the first tropolone metabolite, tropolone stipitaldehyde. In parallel, generation of sesquiterpene alpha-humulene from farnesylpyrophosphate (FPP) is catalyzed by the terpene cyclase eupE. The cytochrome P450 monooxygenase eupD then hydroxylates humulene to humulenol. The putative Diels-Alderase eupF probably catalyzes the formation of the tropolone-humulene skeleton by linking humulenol and the polyketide moiety. The short-chain dehydrogenase/reductase eupG and the flavin-dependent monooxygenase eupH are also essential for eupenifeldin biosynthesis and are likely the additional decorating enzymes of the tropolone-humulene skeleton to produce final eupenifeldin or derivatives. In Phoma sp, this protein is Alpha-humulene synthase eupE.